A 77-amino-acid polypeptide reads, in one-letter code: Translational regulator CsrA (77 aa).

It belongs to the CsrA/RsmA family. As to quaternary structure, homodimer; the beta-strands of each monomer intercalate to form a hydrophobic core, while the alpha-helices form wings that extend away from the core.

Its subcellular location is the cytoplasm. Functionally, a translational regulator that binds mRNA to regulate translation initiation and/or mRNA stability. Usually binds in the 5'-UTR at or near the Shine-Dalgarno sequence preventing ribosome-binding, thus repressing translation. Its main target seems to be the major flagellin gene, while its function is anatagonized by FliW. The chain is Translational regulator CsrA from Desulfitobacterium hafniense (strain DSM 10664 / DCB-2).